The following is a 3387-amino-acid chain: Genome polyprotein (3387 aa).

The Cytoplasmic portion of the chain corresponds to 1 to 100; that stretch reads MNQRKKVVRP…LNILNGRKRS (100 aa). The segment at 36–71 is hydrophobic; homodimerization of capsid protein C; sequence LFSGKGPLRMVLAFITFLRVLSIPPTAGILKRWGQL. Residues 100 to 113 constitute a propeptide, ER anchor for the capsid protein C, removed in mature form by serine protease NS3; that stretch reads STMTLLCLIPTAMA. The chain crosses the membrane as a helical span at residues 101–117; sequence TMTLLCLIPTAMAFHLS. Residues 118 to 237 lie on the Extracellular side of the membrane; that stretch reads TRDGEPLMIV…GAWKHAQRVE (120 aa). A glycan (N-linked (GlcNAc...) asparagine; by host) is linked at N182. Residues 238–258 traverse the membrane as a helical segment; sequence SWILRNPGFALLAGFMAYMIG. Over 259-265 the chain is Cytoplasmic; the sequence is QTGIQRT. Residues 266-279 traverse the membrane as a helical segment; that stretch reads VFFVLMMLVAPSYG. Residues 280–723 lie on the Extracellular side of the membrane; sequence MRCVGVGNRD…AVHQVFGSVY (444 aa). 6 cysteine pairs are disulfide-bonded: C282/C309, C339/C400, C353/C384, C371/C395, C464/C564, and C581/C612. N346 carries N-linked (GlcNAc...) asparagine; by host glycosylation. The segment at 377–390 is fusion peptide; sequence DRGWGNGCGLFGKG. Residues 724 to 746 traverse the membrane as a helical segment; the sequence is TTMFGGVSWMVRILIGFLVLWIG. The Cytoplasmic portion of the chain corresponds to 747-750; that stretch reads TNSR. A helical membrane pass occupies residues 751 to 771; sequence NTSMAMTCIAVGGITLFLGFT. Topologically, residues 772–1194 are extracellular; sequence VHADTGCAVS…MLGDTMSGRM (423 aa). Intrachain disulfides connect C778–C789, C829–C917, C953–C997, C1054–C1103, C1065–C1087, and C1086–C1090. N-linked (GlcNAc...) asparagine; by host glycans are attached at residues N904 and N981. Residues 1195-1218 form a helical membrane-spanning segment; sequence GGQIHLAIMAVFKMSPGYVLGIFL. The Lumenal segment spans residues 1219 to 1224; that stretch reads RKLTSR. Residues 1225 to 1243 form a helical membrane-spanning segment; the sequence is ETALMVIGMAMTTVLSIPH. Residues 1244–1267 lie on the Cytoplasmic side of the membrane; the sequence is DLMEFIDGISLGLILLKMVTHFDN. A helical transmembrane segment spans residues 1268-1288; it reads TQVGTLALSLTFIRSTMPLVM. Position 1289 (A1289) is a topological domain, lumenal. Residues 1290 to 1308 form a helical membrane-spanning segment; it reads WRTIMAVLFVVTLIPLCRT. Over 1309–1316 the chain is Lumenal; that stretch reads SCLQKQSH. Residues 1317 to 1337 traverse the membrane as a helical segment; that stretch reads WVEITALILGAQALPVYLMTL. Residues 1338 to 1345 are Cytoplasmic-facing; the sequence is MKGASKRS. The helical transmembrane segment at 1346-1366 threads the bilayer; sequence WPLNEGIMAVGLVSLLGSALL. The Lumenal portion of the chain corresponds to 1367 to 1369; the sequence is KND. A helical membrane pass occupies residues 1370 to 1390; the sequence is VPLAGPMVAGGLLLAAYVMSG. Over 1391–1437 the chain is Cytoplasmic; sequence SSADLSLEKAANVQWDEMADITGSSPIIEVKQDEDGSFSIRDIEETN. The segment at 1397-1436 is interacts with and activates NS3 protease; sequence LEKAANVQWDEMADITGSSPIIEVKQDEDGSFSIRDIEET. An intramembrane region (helical) is located at residues 1438–1458; sequence MITLLVKLALITVSGLYPLAI. The Cytoplasmic segment spans residues 1459-2146; it reads PVTMTLWYMW…LNELPESLET (688 aa). One can recognise a Peptidase S7 domain in the interval 1475–1652; it reads SGALWDVPSP…ERTGEPDYEV (178 aa). Catalysis depends on charge relay system; for serine protease NS3 activity residues H1525, D1549, and S1609. The region spanning 1654 to 1810 is the Helicase ATP-binding domain; sequence EDIFRKKRLT…QSNSPIEDIE (157 aa). An important for RNA-binding region spans residues 1658-1661; it reads RKKR. 1667 to 1674 is an ATP binding site; the sequence is LHPGAGKT. Residues 1758–1761 carry the DEAH box motif; the sequence is DEAH. The region spanning 1820-1987 is the Helicase C-terminal domain; the sequence is TGFDWITDYQ…IIPTLFGPER (168 aa). K1862 is modified (N6-acetyllysine; by host). A helical transmembrane segment spans residues 2147 to 2167; it reads LMLVALLGAMTAGIFLFFMQG. The Lumenal portion of the chain corresponds to 2168 to 2169; sequence KG. The helical intramembrane region spans 2170-2190; that stretch reads IGKLSMGLIAIAVASGLLWVA. E2191 is a topological domain (lumenal). Residues 2192–2212 form a helical membrane-spanning segment; that stretch reads IQPQWIAASIILEFFLMVLLI. The Cytoplasmic portion of the chain corresponds to 2213–2225; it reads PEPEKQRTPQDNQ. Residues 2226–2246 traverse the membrane as a helical segment; that stretch reads LIYVILTILTIIGLIAANEMG. Topologically, residues 2247-2270 are lumenal; the sequence is LIEKTKTDFGFYQVKTETTILDVD. Positions 2271–2291 form an intramembrane region, helical; it reads LRPASAWTLYAVATTILTPML. At 2292 to 2301 the chain is on the lumenal side; sequence RHTIENTSAN. N-linked (GlcNAc...) asparagine; by host glycans are attached at residues N2297 and N2301. The segment at residues 2302–2322 is an intramembrane region (helical); the sequence is LSLAAIANQAAVLMGLGKGWP. At 2323–2343 the chain is on the lumenal side; the sequence is LHRMDLGVPLLAMGCYSQVNP. Residues 2344-2364 traverse the membrane as a helical segment; sequence TTLIASLVMLLVHYAIIGPGL. Residues 2365–2409 lie on the Cytoplasmic side of the membrane; that stretch reads QAKATREAQKRTAAGIMKNPTVDGITVIDLEPISYDPKFEKQLGQ. The chain crosses the membrane as a helical span at residues 2410–2430; the sequence is VMLLVLCAGQLLLMRTTWAFC. Residues 2431–2455 are Lumenal-facing; sequence EVLTLATGPVLTLWEGNPGRFWNTT. N-linked (GlcNAc...) asparagine; by host glycosylation occurs at N2453. Residues 2456-2476 traverse the membrane as a helical segment; it reads IAVSTANIFRGSYLAGAGLAF. Residues 2477 to 3387 are Cytoplasmic-facing; that stretch reads SLIKNAQTPR…SAPFESEGVL (911 aa). The mRNA cap 0-1 NS5-type MT domain occupies 2489 to 2751; the sequence is TGTTGETLGE…DVDLGAGTRS (263 aa). S2543 contacts S-adenosyl-L-methionine. S2543 carries the phosphoserine modification. K2548 (for 2'-O-MTase activity) is an active-site residue. Residues 2564-2567 carry the SUMO-interacting motif motif; the sequence is VVDL. Residues G2573, W2574, T2591, K2592, D2618, and V2619 each contribute to the S-adenosyl-L-methionine site. The active-site For 2'-O-MTase activity is the D2633. I2634 provides a ligand contact to S-adenosyl-L-methionine. Catalysis depends on for 2'-O-MTase activity residues K2668 and E2704. S-adenosyl-L-methionine is bound at residue Y2706. Residues E2925, H2929, C2934, and C2937 each contribute to the Zn(2+) site. Residues 3016-3166 enclose the RdRp catalytic domain; it reads LIYADDTAGW…PLDERFSTSL (151 aa). The Zn(2+) site is built by H3200, C3216, and C3335.

In the N-terminal section; belongs to the class I-like SAM-binding methyltransferase superfamily. mRNA cap 0-1 NS5-type methyltransferase family. Homodimer. Interacts (via N-terminus) with host EXOC1 (via C-terminus); this interaction results in EXOC1 degradation through the proteasome degradation pathway. As to quaternary structure, forms heterodimers with envelope protein E in the endoplasmic reticulum and Golgi. In terms of assembly, homodimer; in the endoplasmic reticulum and Golgi. Interacts with protein prM. Interacts with non-structural protein 1. Homodimer; Homohexamer when secreted. Interacts with envelope protein E. As to quaternary structure, interacts (via N-terminus) with serine protease NS3. In terms of assembly, forms a heterodimer with serine protease NS3. May form homooligomers. Forms a heterodimer with NS2B. Interacts with NS4B. Interacts with unphosphorylated RNA-directed RNA polymerase NS5; this interaction stimulates RNA-directed RNA polymerase NS5 guanylyltransferase activity. As to quaternary structure, interacts with host MAVS; this interaction inhibits the synthesis of IFN-beta. Interacts with host AUP1; the interaction occurs in the presence of Dengue virus NS4B and induces lipophagy which facilitates production of virus progeny particles. In terms of assembly, interacts with serine protease NS3. Homodimer. Interacts with host STAT2; this interaction inhibits the phosphorylation of the latter, and, when all viral proteins are present (polyprotein), targets STAT2 for degradation. Interacts with serine protease NS3. Interacts with host PAF1 complex; the interaction may prevent the recruitment of the PAF1 complex to interferon-responsive genes, and thus reduces the immune response. Specific enzymatic cleavages in vivo yield mature proteins. Cleavages in the lumen of endoplasmic reticulum are performed by host signal peptidase, whereas cleavages in the cytoplasmic side are performed by serine protease NS3. Signal cleavage at the 2K-4B site requires a prior NS3 protease-mediated cleavage at the 4A-2K site. Post-translationally, cleaved in post-Golgi vesicles by a host furin, releasing the mature small envelope protein M, and peptide pr. This cleavage is incomplete as up to 30% of viral particles still carry uncleaved prM. In terms of processing, N-glycosylated. N-glycosylated. The excreted form is glycosylated and this is required for efficient secretion of the protein from infected cells. Post-translationally, acetylated by host KAT5. Acetylation modulates NS3 RNA-binding and unwinding activities and plays an important positive role for viral replication. In terms of processing, sumoylation of RNA-directed RNA polymerase NS5 increases NS5 protein stability allowing proper viral RNA replication. Phosphorylated on serines residues. This phosphorylation may trigger NS5 nuclear localization.

It is found in the virion. It localises to the host nucleus. The protein localises to the host cytoplasm. Its subcellular location is the host perinuclear region. The protein resides in the secreted. It is found in the virion membrane. It localises to the host endoplasmic reticulum membrane. The protein localises to the host mitochondrion. It catalyses the reaction Selective hydrolysis of -Xaa-Xaa-|-Yaa- bonds in which each of the Xaa can be either Arg or Lys and Yaa can be either Ser or Ala.. The catalysed reaction is RNA(n) + a ribonucleoside 5'-triphosphate = RNA(n+1) + diphosphate. It carries out the reaction a ribonucleoside 5'-triphosphate + H2O = a ribonucleoside 5'-diphosphate + phosphate + H(+). The enzyme catalyses ATP + H2O = ADP + phosphate + H(+). It catalyses the reaction a 5'-end (5'-triphosphoguanosine)-ribonucleoside in mRNA + S-adenosyl-L-methionine = a 5'-end (N(7)-methyl 5'-triphosphoguanosine)-ribonucleoside in mRNA + S-adenosyl-L-homocysteine. The catalysed reaction is a 5'-end (N(7)-methyl 5'-triphosphoguanosine)-ribonucleoside in mRNA + S-adenosyl-L-methionine = a 5'-end (N(7)-methyl 5'-triphosphoguanosine)-(2'-O-methyl-ribonucleoside) in mRNA + S-adenosyl-L-homocysteine + H(+). Plays a role in virus budding by binding to the cell membrane and gathering the viral RNA into a nucleocapsid that forms the core of a mature virus particle. During virus entry, may induce genome penetration into the host cytoplasm after hemifusion induced by the surface proteins. Can migrate to the cell nucleus where it modulates host functions. Overcomes the anti-viral effects of host EXOC1 by sequestering and degrading the latter through the proteasome degradation pathway. In terms of biological role, inhibits RNA silencing by interfering with host Dicer. Functionally, prevents premature fusion activity of envelope proteins in trans-Golgi by binding to envelope protein E at pH6.0. After virion release in extracellular space, gets dissociated from E dimers. Its function is as follows. Acts as a chaperone for envelope protein E during intracellular virion assembly by masking and inactivating envelope protein E fusion peptide. prM is the only viral peptide matured by host furin in the trans-Golgi network probably to avoid catastrophic activation of the viral fusion activity in acidic Golgi compartment prior to virion release. prM-E cleavage is inefficient, and many virions are only partially matured. These uncleaved prM would play a role in immune evasion. May play a role in virus budding. Exerts cytotoxic effects by activating a mitochondrial apoptotic pathway through M ectodomain. May display a viroporin activity. In terms of biological role, binds to host cell surface receptor and mediates fusion between viral and cellular membranes. Envelope protein is synthesized in the endoplasmic reticulum in the form of heterodimer with protein prM. They play a role in virion budding in the ER, and the newly formed immature particle is covered with 60 spikes composed of heterodimer between precursor prM and envelope protein E. The virion is transported to the Golgi apparatus where the low pH causes dissociation of PrM-E heterodimers and formation of E homodimers. prM-E cleavage is inefficient, and many virions are only partially matured. These uncleaved prM would play a role in immune evasion. Functionally, involved in immune evasion, pathogenesis and viral replication. Once cleaved off the polyprotein, is targeted to three destinations: the viral replication cycle, the plasma membrane and the extracellular compartment. Essential for viral replication. Required for formation of the replication complex and recruitment of other non-structural proteins to the ER-derived membrane structures. Excreted as a hexameric lipoparticle that plays a role against host immune response. Antagonizing the complement function. Binds to the host macrophages and dendritic cells. Inhibits signal transduction originating from Toll-like receptor 3 (TLR3). Its function is as follows. Disrupts the host endothelial glycocalyx layer of host pulmonary microvascular endothelial cells, inducing degradation of sialic acid and shedding of heparan sulfate proteoglycans. NS1 induces expression of sialidases, heparanase, and activates cathepsin L, which activates heparanase via enzymatic cleavage. These effects are probably linked to the endothelial hyperpermeability observed in severe dengue disease. Component of the viral RNA replication complex that functions in virion assembly and antagonizes the host immune response. In terms of biological role, required cofactor for the serine protease function of NS3. May have membrane-destabilizing activity and form viroporins. Functionally, displays three enzymatic activities: serine protease, NTPase and RNA helicase. NS3 serine protease, in association with NS2B, performs its autocleavage and cleaves the polyprotein at dibasic sites in the cytoplasm: C-prM, NS2A-NS2B, NS2B-NS3, NS3-NS4A, NS4A-2K and NS4B-NS5. NS3 RNA helicase binds RNA and unwinds dsRNA in the 3' to 5' direction. Its function is as follows. Regulates the ATPase activity of the NS3 helicase activity. NS4A allows NS3 helicase to conserve energy during unwinding. Plays a role in the inhibition of the host innate immune response. Interacts with host MAVS and thereby prevents the interaction between RIGI and MAVS. In turn, IFN-beta production is impaired. Interacts with host AUP1 which mediates induction of lipophagy in host cells and facilitates production of virus progeny particles. Functions as a signal peptide for NS4B and is required for the interferon antagonism activity of the latter. In terms of biological role, induces the formation of ER-derived membrane vesicles where the viral replication takes place. Inhibits interferon (IFN)-induced host STAT1 phosphorylation and nuclear translocation, thereby preventing the establishment of cellular antiviral state by blocking the IFN-alpha/beta pathway. Functionally, replicates the viral (+) and (-) RNA genome, and performs the capping of genomes in the cytoplasm. NS5 methylates viral RNA cap at guanine N-7 and ribose 2'-O positions. Besides its role in RNA genome replication, also prevents the establishment of cellular antiviral state by blocking the interferon-alpha/beta (IFN-alpha/beta) signaling pathway. Inhibits host TYK2 and STAT2 phosphorylation, thereby preventing activation of JAK-STAT signaling pathway. May reduce immune responses by preventing the recruitment of the host PAF1 complex to interferon-responsive genes. This is Genome polyprotein from Aedes aegypti (Yellowfever mosquito).